The following is a 108-amino-acid chain: Small ribosomal subunit protein uS10 (108 aa).

Belongs to the universal ribosomal protein uS10 family. Part of the 30S ribosomal subunit.

Its function is as follows. Involved in the binding of tRNA to the ribosomes. This chain is Small ribosomal subunit protein uS10, found in Ehrlichia chaffeensis (strain ATCC CRL-10679 / Arkansas).